The sequence spans 121 residues: Large ribosomal subunit protein uL18 (121 aa).

The protein belongs to the universal ribosomal protein uL18 family. In terms of assembly, part of the 50S ribosomal subunit; part of the 5S rRNA/L5/L18/L25 subcomplex. Contacts the 5S and 23S rRNAs.

This is one of the proteins that bind and probably mediate the attachment of the 5S RNA into the large ribosomal subunit, where it forms part of the central protuberance. This is Large ribosomal subunit protein uL18 from Ehrlichia chaffeensis (strain ATCC CRL-10679 / Arkansas).